Reading from the N-terminus, the 131-residue chain is UPF0344 protein Sca_0577 (131 aa).

Helical transmembrane passes span 1–21 (MLHLHIFSWVIGIILFIVSYI), 42–62 (LFLVLILFSGVWQVVEEFATA), 69–89 (LLTLKMICGIGVVALMEVTLV), and 99–119 (GLFWGTIALIIVTMALGIILP).

Belongs to the UPF0344 family.

It localises to the cell membrane. The chain is UPF0344 protein Sca_0577 from Staphylococcus carnosus (strain TM300).